The chain runs to 600 residues: UPF0588 membrane protein C20F10.02c (600 aa).

2 consecutive transmembrane segments (helical) span residues 409-429 and 437-457; these read LSAT…TSLV and YHWL…SVLI.

Belongs to the UPF0588 family.

The protein localises to the membrane. This chain is UPF0588 membrane protein C20F10.02c, found in Schizosaccharomyces pombe (strain 972 / ATCC 24843) (Fission yeast).